Consider the following 1034-residue polypeptide: Vacuolar membrane protease (1034 aa).

The Cytoplasmic segment spans residues 1–11; it reads MAVKNPFGFTT. A helical transmembrane segment spans residues 12 to 32; sequence GPVTFWLIVVYAAFLIPLVWI. Residues 33-418 are Vacuolar-facing; the sequence is HESVPAVPSS…GFAILELRGL (386 aa). N-linked (GlcNAc...) asparagine glycans are attached at residues Asn-51 and Asn-141. Positions 200 and 212 each coordinate Zn(2+). The active-site Proton acceptor is the Glu-246. The Zn(2+) site is built by Glu-247, Glu-272, and His-345. Residues 419–439 form a helical membrane-spanning segment; sequence FAWTLTLLIVSPLVLALVTYI. Residues 440-470 are Cytoplasmic-facing; that stretch reads LSRKDKYYFFSRKVTADEDDEPVSVGGWKGF. Residues 471 to 491 traverse the membrane as a helical segment; it reads FRFPFALVLSASITVLSAFLI. The Vacuolar portion of the chain corresponds to 492–497; that stretch reads RRVNPH. The chain crosses the membrane as a helical span at residues 498-518; sequence IIYSSPYAVWAMTLSLFFLVF. Over 519–536 the chain is Cytoplasmic; the sequence is WTIAKGASVVRPSALQRG. A helical transmembrane segment spans residues 537–557; that stretch reads YAHIWLFVISWVILVAVTAAA. Residues 558-567 lie on the Vacuolar side of the membrane; it reads DRFKIASGYP. Residues 568–588 form a helical membrane-spanning segment; it reads FAFFHSAVFVSALISLCDLFA. Residues 589-703 lie on the Cytoplasmic side of the membrane; the sequence is LPSKQEFARN…NLPSWTWFFQ (115 aa). The interval 623-653 is disordered; the sequence is HSHVEDDVAEEPTETTPLRSGENGNGNNGTI. A helical transmembrane segment spans residues 704–724; it reads LLLLAPITITVFLQIALFIVS. Over 725 to 736 the chain is Vacuolar; the sequence is AIHSAAADGNDP. The helical transmembrane segment at 737–757 threads the bilayer; the sequence is ILVYAAIAAFSIIILLPATPF. At 758 to 762 the chain is on the cytoplasmic side; that stretch reads IHRAS. Residues 763–783 traverse the membrane as a helical segment; the sequence is FYLPLFLLLVFFVTLIYNLVA. Topologically, residues 784–1034 are vacuolar; sequence FPFSAENRLK…LVEGRKKFRA (251 aa). Asn-805, Asn-866, and Asn-879 each carry an N-linked (GlcNAc...) asparagine glycan.

The protein belongs to the peptidase M28 family. Requires Zn(2+) as cofactor.

The protein resides in the vacuole membrane. May be involved in vacuolar sorting and osmoregulation. The chain is Vacuolar membrane protease from Colletotrichum graminicola (strain M1.001 / M2 / FGSC 10212) (Maize anthracnose fungus).